The following is a 492-amino-acid chain: N-succinylglutamate 5-semialdehyde dehydrogenase (492 aa).

NAD(+) is bound at residue 220-225 (GSASTG). Catalysis depends on residues Glu243 and Cys277.

The protein belongs to the aldehyde dehydrogenase family. AstD subfamily.

It carries out the reaction N-succinyl-L-glutamate 5-semialdehyde + NAD(+) + H2O = N-succinyl-L-glutamate + NADH + 2 H(+). It functions in the pathway amino-acid degradation; L-arginine degradation via AST pathway; L-glutamate and succinate from L-arginine: step 4/5. Functionally, catalyzes the NAD-dependent reduction of succinylglutamate semialdehyde into succinylglutamate. This chain is N-succinylglutamate 5-semialdehyde dehydrogenase, found in Salmonella enteritidis PT4 (strain P125109).